Here is a 415-residue protein sequence, read N- to C-terminus: Mitogen-activated protein kinase MPS1 (415 aa).

Positions 23–314 constitute a Protein kinase domain; sequence YTVTKELGQG…VEQALEHPYL (292 aa). ATP-binding positions include 29-37 and Lys52; that span reads LGQGAYGIV. The interval 363–394 is disordered; sequence GAGGHGAPHAPQVPIPAGAGQGQWKAEDPRPQ.

Belongs to the protein kinase superfamily. Ser/Thr protein kinase family. MAP kinase subfamily. Interacts with transcription factor MIG1. Interacts with transcription factor SWI6. Requires Mg(2+) as cofactor.

The enzyme catalyses L-seryl-[protein] + ATP = O-phospho-L-seryl-[protein] + ADP + H(+). The catalysed reaction is L-threonyl-[protein] + ATP = O-phospho-L-threonyl-[protein] + ADP + H(+). Its function is as follows. Mitogen-activated protein kinase; part of the MCK1-MKK2-MPS1 MAP kinase (MAPK) signal transduction cascade that is essential for cell wall integrity and plant infection, but not for plant defense responses. Beside its role in pathogenesis, the MPS1 cascade is active in conidiation and cellular stress responses. Targets downstream of the MPS1-MAPK pathway include transcription factors MIG1 and SWI6, as well as GSK1 and MPG1. The chain is Mitogen-activated protein kinase MPS1 from Pyricularia oryzae (strain 70-15 / ATCC MYA-4617 / FGSC 8958) (Rice blast fungus).